Consider the following 233-residue polypeptide: Small ribosomal subunit protein uS3 (233 aa).

One can recognise a KH type-2 domain in the interval 39-107 (VREFLKKRLG…PVHVNIEEVR (69 aa)). Positions 212 to 233 (VQATPAAPEKKMRKGARNAAAN) are disordered.

It belongs to the universal ribosomal protein uS3 family. In terms of assembly, part of the 30S ribosomal subunit. Forms a tight complex with proteins S10 and S14.

Functionally, binds the lower part of the 30S subunit head. Binds mRNA in the 70S ribosome, positioning it for translation. The chain is Small ribosomal subunit protein uS3 from Chromobacterium violaceum (strain ATCC 12472 / DSM 30191 / JCM 1249 / CCUG 213 / NBRC 12614 / NCIMB 9131 / NCTC 9757 / MK).